The primary structure comprises 213 residues: GTP cyclohydrolase 1 (213 aa).

Zn(2+) contacts are provided by Cys104, His107, and Cys175.

The protein belongs to the GTP cyclohydrolase I family. As to quaternary structure, homomer.

The enzyme catalyses GTP + H2O = 7,8-dihydroneopterin 3'-triphosphate + formate + H(+). It functions in the pathway cofactor biosynthesis; 7,8-dihydroneopterin triphosphate biosynthesis; 7,8-dihydroneopterin triphosphate from GTP: step 1/1. The sequence is that of GTP cyclohydrolase 1 from Brucella canis (strain ATCC 23365 / NCTC 10854 / RM-666).